Here is a 158-residue protein sequence, read N- to C-terminus: Small ribosomal subunit protein uS9 (158 aa).

Positions 1 to 20 are enriched in polar residues; sequence MSETMQSLDQLSALKTTQPD. The tract at residues 1-29 is disordered; it reads MSETMQSLDQLSALKTTQPDAPTYTKKVD.

This sequence belongs to the universal ribosomal protein uS9 family.

In Rhodopseudomonas palustris (strain BisB5), this protein is Small ribosomal subunit protein uS9.